The chain runs to 233 residues: Small ribosomal subunit protein uS7m (233 aa).

Residues 1 to 28 (MAAPTAAGLCPRLRAWLPRLTQVRWSRY) constitute a mitochondrion transit peptide.

The protein belongs to the universal ribosomal protein uS7 family. In terms of assembly, component of the mitochondrial ribosome small subunit (28S) which comprises a 12S rRNA and about 30 distinct proteins.

The protein localises to the mitochondrion. In Gallus gallus (Chicken), this protein is Small ribosomal subunit protein uS7m (MRPS7).